Here is a 139-residue protein sequence, read N- to C-terminus: Small ribosomal subunit protein bS16 (139 aa).

A disordered region spans residues 85 to 108 (ESKSGKKPAKKATTKEASAKKPTD). Residues 97 to 108 (TTKEASAKKPTD) show a composition bias toward basic and acidic residues.

It belongs to the bacterial ribosomal protein bS16 family.

This chain is Small ribosomal subunit protein bS16, found in Leuconostoc mesenteroides subsp. mesenteroides (strain ATCC 8293 / DSM 20343 / BCRC 11652 / CCM 1803 / JCM 6124 / NCDO 523 / NBRC 100496 / NCIMB 8023 / NCTC 12954 / NRRL B-1118 / 37Y).